The chain runs to 249 residues: MASRRMETKPVITCLKTLLIIYSFVFWITGVILLAVGVWGKLTLGTYISLIAENSTNAPYVLIGTGTTIVVFGLFGCFATCRGSPWMLKLYAMFLSLVFLAELVAGISGFVFRHEIKDTFLRTYTDAMQTYNGNDERSRAVDHVQRSLSCCGVQNYTNWSTSPYFLEHGIPPSCCMNETDCNPQDLHNLTVAATKVNQKGCYDLVTSFMETNMGIIAGVAFGIAFSQLIGMLLACCLSRFITANQYEMV.

At 1–16 the chain is on the cytoplasmic side; sequence MASRRMETKPVITCLK. A helical membrane pass occupies residues 17–40; that stretch reads TLLIIYSFVFWITGVILLAVGVWG. Residues 41–56 lie on the Extracellular side of the membrane; that stretch reads KLTLGTYISLIAENST. The N-linked (GlcNAc...) asparagine glycan is linked to asparagine 54. A helical membrane pass occupies residues 57–75; it reads NAPYVLIGTGTTIVVFGLF. Residues 76–86 lie on the Cytoplasmic side of the membrane; the sequence is GCFATCRGSPW. The chain crosses the membrane as a helical span at residues 87–112; it reads MLKLYAMFLSLVFLAELVAGISGFVF. The Extracellular segment spans residues 113–213; that stretch reads RHEIKDTFLR…LVTSFMETNM (101 aa). N-linked (GlcNAc...) asparagine glycans are attached at residues asparagine 155, asparagine 158, asparagine 177, and asparagine 188. A helical transmembrane segment spans residues 214 to 234; it reads GIIAGVAFGIAFSQLIGMLLA. Residues 235 to 249 lie on the Cytoplasmic side of the membrane; the sequence is CCLSRFITANQYEMV.

This sequence belongs to the tetraspanin (TM4SF) family. As to quaternary structure, (Microbial infection) Interacts with herpes simplex virus 1 (HHV-1) UL35. In terms of tissue distribution, not solely expressed in T-cells. Expressed in acute myelocytic leukemia cells of some patients.

The protein localises to the membrane. May be involved in cell proliferation and cell motility. In Homo sapiens (Human), this protein is Tetraspanin-7 (TSPAN7).